Reading from the N-terminus, the 1128-residue chain is Scavenger receptor cysteine-rich domain superfamily protein (1128 aa).

Residues 1-24 form the signal peptide; sequence MTSLRRGNICWVAVCAALLTLTRG. The Extracellular segment spans residues 25–1051; sequence IDVIAKPSRT…VGAQAGPAGG (1027 aa). 9 consecutive SRCR domains span residues 40-140, 143-245, 248-348, 351-450, 453-553, 555-654, 657-757, 759-866, and 868-968; these read VQLV…VVCN, VRLA…VICT, IRLV…VICT, VRLV…AKCQ, VQLV…VVCR, IRLA…VVCR, LRLA…VVCT, LRLT…VLCK, and IRLV…VQCK. Intrachain disulfides connect C65–C129, C78–C139, C109–C119, C168–C234, C181–C244, C212–C222, C273–C337, C286–C347, C316–C326, C376–C439, C389–C449, C419–C429, C478–C542, C491–C552, C522–C532, C583–C644, C596–C653, C624–C634, C682–C746, C695–C756, and C726–C736. N-linked (GlcNAc...) asparagine glycosylation is present at N87. Residues N190 and N194 are each glycosylated (N-linked (GlcNAc...) asparagine). Residue N229 is glycosylated (N-linked (GlcNAc...) asparagine). N422 carries N-linked (GlcNAc...) asparagine glycosylation. Residues N601 and N612 are each glycosylated (N-linked (GlcNAc...) asparagine). N765, N808, N834, and N936 each carry an N-linked (GlcNAc...) asparagine glycan. 6 cysteine pairs are disulfide-bonded: C803/C865, C833/C843, C906/C967, C937/C947, C971/C1013, and C999/C1026. The region spanning 969-1028 is the Sushi domain; sequence AGCDWPGPIRHGSFSPNRSSYDPLTTIDVKCDAGYELMGSKTLQCVTGCDWSRPTPECQR. An N-linked (GlcNAc...) asparagine glycan is attached at N985. Residue N1031 is glycosylated (N-linked (GlcNAc...) asparagine). Residues 1052–1072 form a helical membrane-spanning segment; the sequence is VMLIIGIILGAVVMMLIACVA. Residues 1073–1128 are Cytoplasmic-facing; the sequence is LYLKGRNKNIGRGNPATTSAIWKPKKEFDELKEPVLSFSAMTAGGAGPEDGMGEDI.

In terms of tissue distribution, from the mid-gastrula stage, expressed only in mesenchyme cells that are migrating toward the body wall. At the brachiolaria stage, expressed in presumptive coelomocytes of the coelomic pouch. Also expressed in adult coelomocytes (at protein level).

The protein localises to the cytoplasmic vesicle membrane. Involved in aggregate formation and phagocytosis by larval mesenchyme cells and adult coelomocytes. Binds to bacteria and may act as an opsonin in the innate immune system. The polypeptide is Scavenger receptor cysteine-rich domain superfamily protein (Patiria pectinifera (Starfish)).